Consider the following 1299-residue polypeptide: Protein prickle (1299 aa).

Over residues 1 to 19 the composition is skewed to gly residues; that stretch reads MSSLSTGGGAGGSSGGPGG. Disordered stretches follow at residues 1-24, 115-181, 241-289, 368-396, and 425-527; these read MSSL…DAAA, ADDG…EVTQ, EEES…PQVP, LPRH…PSSS, and LPPH…DDDS. Over residues 145 to 159 the composition is skewed to basic residues; the sequence is SPRRSKKLLRSLRAH. Positions 168-181 are enriched in polar residues; the sequence is NDTTTANESSEVTQ. Residues 263–272 are compositionally biased toward pro residues; sequence PVPPLPPPPA. Over residues 425–434 the composition is skewed to low complexity; sequence LPPHHQQHPG. Over residues 435–445 the composition is skewed to gly residues; the sequence is AGMGPGPGSGA. Positions 457–469 are enriched in polar residues; the sequence is PGCSANPKYSNAQ. The 109-residue stretch at 515-623 folds into the PET domain; the sequence is MDMQRQSHSD…NVRQLMSARP (109 aa). A compositionally biased stretch (basic and acidic residues) spans 516–525; it reads DMQRQSHSDD. LIM zinc-binding domains are found at residues 622–686, 687–747, and 748–810; these read RPCD…ETLK, PRCS…MFAE, and YCDY…GEPP. 3 disordered regions span residues 807-865, 902-940, and 1026-1249; these read GEPP…HQAT, KDLE…GDFQ, and ADIL…SSSS. Residues 844-864 show a composition bias toward low complexity; it reads PSSHASSSPPMSPQQQQQHQA. Polar residues-rich tracts occupy residues 922–934 and 1070–1081; these read RASS…SPLN and SLNTPMSTQSAS. Residues 1089 to 1101 are compositionally biased toward low complexity; it reads SILSGASSSSPMS. Residues 1136–1150 show a composition bias toward basic and acidic residues; the sequence is GERERDRDKDKEGGG. Basic residues predominate over residues 1151-1183; the sequence is RHGHGHSSRRRRRRKSSSSSSHHRSGSGHRSHS. The segment covering 1216 to 1231 has biased composition (basic and acidic residues); it reads SPSRQQRERERERERE. The segment covering 1238-1249 has biased composition (low complexity); that stretch reads VCSTCSSSSSSS.

Belongs to the prickle / espinas / testin family. Interacts with dsh; PET and LIM domains interact with dsh DEP domain, in wing cells. Interacts with Vang in photoreceptor cells. Expressed in the wing, leg and eye imaginal disks. Expressed within the photoreceptors of the eye.

The protein localises to the cell membrane. Functionally, acts in a planar cell polarity (PCP) complex; polarization along the apical/basal axis of epithelial cells. Correct expression of the alternative isoforms is required for PCP signaling in imaginal disks. PCP signaling in the wing disk requires the receptor fz and the cytoplasmic proteins dsh and pk. These act in a feedback loop leading to activation of the jnk cascade and subsequent polarized arrangement of hairs and bristles. Dgo and pk compete with one another for dsh binding, thereby modulating fz dsh activity and ensuring tight control over fz PCP signaling. Vang, stan and pk function together to regulate the establishment of tissue polarity in the adult eye. This chain is Protein prickle, found in Drosophila melanogaster (Fruit fly).